The following is a 537-amino-acid chain: Prolyl 4-hydroxylase subunit alpha-2 (537 aa).

Positions 1 to 23 (MKLQVLVLVLLMSWFGVLSWVQA) are cleaved as a signal peptide. Asn117 is a glycosylation site (N-linked (GlcNAc...) asparagine). One copy of the TPR repeat lies at 209–242 (SLVLDYLSYAVFQLGDLHRAVELTRRLLSLDPSH). Asn266 carries N-linked (GlcNAc...) asparagine glycosylation. In terms of domain architecture, Fe2OG dioxygenase spans 414–522 (TAELLQVANY…KWVSNKWFHE (109 aa)). Fe cation contacts are provided by His432 and Asp434. Lys482 bears the N6-succinyllysine mark. Position 503 (His503) interacts with Fe cation. Position 513 (Lys513) interacts with 2-oxoglutarate.

Belongs to the P4HA family. In terms of assembly, heterotetramer of two alpha-2 chains and two beta chains (P4HB) (the beta chain is the multi-functional PDI), where P4HB plays the role of a structural subunit; this tetramer catalyzes the formation of 4-hydroxyproline in collagen. Fe(2+) is required as a cofactor. It depends on L-ascorbate as a cofactor. In terms of tissue distribution, expressed at least in brain, heart and lung.

It is found in the endoplasmic reticulum lumen. It carries out the reaction L-prolyl-[collagen] + 2-oxoglutarate + O2 = trans-4-hydroxy-L-prolyl-[collagen] + succinate + CO2. Its activity is regulated as follows. Inhibited by poly(L-proline) only at very high concentrations. In terms of biological role, catalyzes the post-translational formation of 4-hydroxyproline in -Xaa-Pro-Gly- sequences in collagens and other proteins. This Mus musculus (Mouse) protein is Prolyl 4-hydroxylase subunit alpha-2 (P4ha2).